We begin with the raw amino-acid sequence, 473 residues long: MALKVVSFPGDLAAVSFLDSNRGGAFNQLKVDLPFQTRDRRAVSLRRTCCSMQQAPPPAWPGRAVVEPGRRSWDGPKPISIVGSTGSIGTQTLDIVAENPDKFRVVALAAGSNVTLLADQVKTFKPKLVAVRNESLVDELKEALADCDWKPEIIPGEQGVIEVARHPDAVTVVTGIVGCAGLKPTVAAIEAGKDIALANKETLIAGGPFVLPLAQKHKVKILPADSEHSAIFQCIQGLPEGALRRIILTASGGAFRDWPVDKLKEVKVADALKHPNWNMGKKITVDSATLFNKGLEVIEAHYLFGAEYDDIEIVIHPQSIIHSMIETQDSSVLAQLGWPDMRIPILYTMSWPDRIYCSEVTWPRLDLCKLGSLTFKAPDNVKYPSMDLAYAAGRAGGTMTGVLSAANEKAVELFIDEKIGYLDIFKVVELTCDAHRNELVTRPSLEEIIHYDLWAREYAASLQPSTGLSPVPV.

The N-terminal 49 residues, Met-1–Cys-49, are a transit peptide targeting the chloroplast. Residues Thr-85, Gly-86, Ser-87, Ile-88, Gly-111, Asn-113, and Asn-199 each coordinate NADPH. Position 200 (Lys-200) interacts with 1-deoxy-D-xylulose 5-phosphate. Residue Glu-201 participates in NADPH binding. Mn(2+) is bound at residue Asp-225. Residues Ser-226, Glu-227, Ser-251, and His-274 each contribute to the 1-deoxy-D-xylulose 5-phosphate site. Glu-227 contacts Mn(2+). Position 280 (Gly-280) interacts with NADPH. 1-deoxy-D-xylulose 5-phosphate is bound by residues Ser-287, Asn-292, Lys-293, and Glu-296. Glu-296 provides a ligand contact to Mn(2+).

Belongs to the DXR family. It depends on Mn(2+) as a cofactor. Requires Mg(2+) as cofactor.

Its subcellular location is the plastid. It is found in the chloroplast stroma. The catalysed reaction is 2-C-methyl-D-erythritol 4-phosphate + NADP(+) = 1-deoxy-D-xylulose 5-phosphate + NADPH + H(+). The protein operates within isoprenoid biosynthesis; isopentenyl diphosphate biosynthesis via DXP pathway; isopentenyl diphosphate from 1-deoxy-D-xylulose 5-phosphate: step 1/6. In terms of biological role, enzyme of the plastid non-mevalonate pathway for isoprenoid biosynthesis that catalyzes the NADPH-dependent rearrangement and reduction of 1-deoxy-D-xylulose-5-phosphate (DXP) to 2-C-methyl-D-erythritol 4-phosphate (MEP). Required for chloroplast development. The polypeptide is 1-deoxy-D-xylulose 5-phosphate reductoisomerase, chloroplastic (DXR) (Oryza sativa subsp. japonica (Rice)).